The sequence spans 356 residues: GDSL esterase/lipase At5g37690 (356 aa).

The signal sequence occupies residues 1-18; that stretch reads MMILRLALAIVISTYATA. S34 serves as the catalytic Nucleophile. 2 N-linked (GlcNAc...) asparagine glycosylation sites follow: N116 and N291. Active-site residues include D322 and H325.

This sequence belongs to the 'GDSL' lipolytic enzyme family.

The protein localises to the secreted. The chain is GDSL esterase/lipase At5g37690 from Arabidopsis thaliana (Mouse-ear cress).